The chain runs to 443 residues: D-serine dehydratase (443 aa).

Lys118 carries the N6-(pyridoxal phosphate)lysine modification.

Belongs to the serine/threonine dehydratase family. DsdA subfamily. Monomer. It depends on pyridoxal 5'-phosphate as a cofactor.

The enzyme catalyses D-serine = pyruvate + NH4(+). The protein is D-serine dehydratase of Photorhabdus laumondii subsp. laumondii (strain DSM 15139 / CIP 105565 / TT01) (Photorhabdus luminescens subsp. laumondii).